We begin with the raw amino-acid sequence, 701 residues long: MSSARRPSKLLSEKQSDKLAQIIQNFFLKAAHVIFHFRVAFPSVVLQPDDSYGAMGDTFSQSKYNNRWFNLDLGNYEIPRTELSLWRNKDILSLPPLVLETFLDLRGLSSNQTLMLDDVIVKTSKKSEIVLERWLIEFDLSTFDNEVMEFPSIYKKIIILFRSLYLLAGLLPSYRLRDKLVKSKSKNSAIHVSCRILDGSKPITSKGRIGLSKKLLSEEEHTSSKKLQPVLTPIGALRVSVSYRTNCNFQVSDTEEALSSQFMLDHLPSVRTNYDSDGNSLTSPMDYLQNRVSSASIHWSDQSPRRRSSTRSVQLFKVGSINSSSSPPPGATQSNQSVSSFSTSKPIPVTLNKTNSSASLVPILRQNKDSLPKSIGSMVQNQMQETGHQVSSNSRRFSSSFGSRFRTVSSRNNSLDGQLVVANQPFSTPSNNPILHNFRSRNKSPSVSSTELGPSSSIYMDDDLDSFMKMLDSKPDLRFPSNSPSVYEDPLANFKTFQKSNDFLALEQQQHGSPTSNQIMIHSQSQTSQSQVFKRTVFSDRSRRGSVSSNYSPSSQALRPGASAPMVTPSVTYGKFHASSGSPSNSSLAQYLRHNSSPPASATAVATVHNSLRRLTSSSQRTNTNSTNSSTRPVNPELLKLKSFNEDVFESDDDEHDEHSPRSTDTKSRNTGPSSGHAEDDEDDLLFAMSDMTLAKNNQEF.

3 disordered regions span residues Gly319–Thr343, Ile521–Ser563, and His577–Phe701. Over residues Thr332–Thr343 the composition is skewed to low complexity. Polar residues-rich tracts occupy residues Ile521–Phe533 and Gly545–Ala557. Over residues Ser596–Arg632 the composition is skewed to low complexity. Positions Asp647–His656 are enriched in acidic residues. The segment covering Asp657–Ser668 has biased composition (basic and acidic residues).

It belongs to the ATG13 family. Fungi subfamily. As to quaternary structure, interacts with ATG1 to form the ATG1-ATG13 kinase complex.

It is found in the cytoplasm. The protein resides in the preautophagosomal structure. Its function is as follows. Activates the ATG1 kinase in a nutritional condition dependent manner through the TOR pathway, leading to autophagy. Also involved in cytoplasm to vacuole transport (Cvt) and more specifically in Cvt vesicle formation. Seems to play a role in the switching machinery regulating the conversion between the Cvt pathway and autophagy. Finally, ATG13 is also required for glycogen storage during stationary phase. This Pichia angusta (Yeast) protein is Autophagy-related protein 13 (ATG13).